Here is a 317-residue protein sequence, read N- to C-terminus: Cyclin-dependent kinase 1 (317 aa).

The Protein kinase domain maps to tyrosine 7–phenylalanine 292. Residues valine 13–valine 21 and lysine 37 each bind ATP. Residue threonine 17 is modified to Phosphothreonine. Tyrosine 18 carries the post-translational modification Phosphotyrosine; by SWE1. Aspartate 133 (proton acceptor) is an active-site residue. Threonine 166 is modified (phosphothreonine; by CAK). A disordered region spans residues aspartate 296–glutamine 317.

This sequence belongs to the protein kinase superfamily. CMGC Ser/Thr protein kinase family. CDC2/CDKX subfamily. As to quaternary structure, forms several complexes with cyclins CCN1, CLB2, CLN3, and HGC1. The CDC28-CCN1 complex associates with septin CDC11 upon hyphal induction. Interacts with IQG1, RFA2, and HSP90. In terms of processing, phosphorylated at Tyr-18 by SWE1 in a cell cycle-dependent manner. Yeast-form and hyphal cells display similar dynamics of phosphorylation and dephosphorylation of Tyr-18. Tyr-18 phosphorylation leads to inhibition of CDC28 kinase activity.

The catalysed reaction is L-seryl-[protein] + ATP = O-phospho-L-seryl-[protein] + ADP + H(+). It catalyses the reaction L-threonyl-[protein] + ATP = O-phospho-L-threonyl-[protein] + ADP + H(+). Phosphorylation at Thr-17 or Tyr-18 inactivates the enzyme, while phosphorylation at Thr-166 activates it. Functionally, cyclin-dependent kinase that acts as a master regulator of the mitotic and meiotic cell cycles. May drive the G1-S transition. Plays a role in mitotic exit. Plays a role in the expression of morphology-related transcription factors, and especially hyphae-specific genes. Binds distinct cyclin subunits as cells progress through the division cycle or flamentous growth. The CDC28-CLB2 complex regulates cytokinesis partly by phosphorylating the actomyosin ring component IQG1. The CDC28-CLN3 complex phosphorylates SLA1 which regulates cortical actin patch dynamics. The CDC28-CCN1 complex phosphorylates CDC11 and SEC2 upon induction of filamentous growth. The CDC28-HGC1 complex also phosphorylates SEC2 and maintains CDC11 phosphorylation throughout hyphal growth. Moreover, the CDC28-HGC1 complex phosphorylates and prevents RGA2 from localizing to hyphal tips, leading to localized CDC42 activation for hyphal extension. CDC28-HGC1 phosphorylation of EFG1 represses cell separation genes during hyphal growth. Additional substrates for CDC28 are RFA2 in G1-phase; MOB2, which is required for the maintenance of polarisome components and for inhibition of cell separation in hyphae; and GIN4 to regulate its association to SEP7 and subsequent septin ring assembly. The polypeptide is Cyclin-dependent kinase 1 (Candida albicans (strain SC5314 / ATCC MYA-2876) (Yeast)).